A 703-amino-acid polypeptide reads, in one-letter code: Polyribonucleotide nucleotidyltransferase (703 aa).

The Mg(2+) site is built by D485 and D491. The region spanning 552–611 is the KH domain; the sequence is PRAYTINIDTDKIRTLIGTGGKTINKIIEETGVKIDIREDGTVFVLSSDADSANRALKMI. The S1 motif domain occupies 621 to 689; that stretch reads GEVYLGKVTK…NQGRVNLSRK (69 aa).

This sequence belongs to the polyribonucleotide nucleotidyltransferase family. Requires Mg(2+) as cofactor.

Its subcellular location is the cytoplasm. It carries out the reaction RNA(n+1) + phosphate = RNA(n) + a ribonucleoside 5'-diphosphate. Involved in mRNA degradation. Catalyzes the phosphorolysis of single-stranded polyribonucleotides processively in the 3'- to 5'-direction. The protein is Polyribonucleotide nucleotidyltransferase of Clostridium acetobutylicum (strain ATCC 824 / DSM 792 / JCM 1419 / IAM 19013 / LMG 5710 / NBRC 13948 / NRRL B-527 / VKM B-1787 / 2291 / W).